The primary structure comprises 268 residues: Zinc transporter ZupT (268 aa).

The next 8 membrane-spanning stretches (helical) occupy residues 5–25 (ILFA…GSII), 38–58 (TVSL…EIFV), 72–92 (AGYI…ALID), 124–144 (MGLF…LATF), 152–172 (TLGI…GLAV), 187–207 (FVLS…GFFL), 211–231 (LFTE…MVYI), and 248–268 (LAIG…LLFL). Fe(2+) contacts are provided by Asn136 and Glu139. Residues Glu139 and His164 each coordinate Zn(2+). Residues Asn165, Glu168, and Glu197 each coordinate Fe(2+). Glu168 provides a ligand contact to Zn(2+).

This sequence belongs to the ZIP transporter (TC 2.A.5) family. ZupT subfamily.

The protein localises to the cell inner membrane. It carries out the reaction Zn(2+)(in) = Zn(2+)(out). In terms of biological role, mediates zinc uptake. May also transport other divalent cations. This chain is Zinc transporter ZupT, found in Chlorobaculum parvum (strain DSM 263 / NCIMB 8327) (Chlorobium vibrioforme subsp. thiosulfatophilum).